The primary structure comprises 685 residues: Protein SPT2 homolog (685 aa).

The segment at 1 to 570 (MDFREILMIA…PPLSGYRAAQ (570 aa)) is important for interaction with DNA. A Glycyl lysine isopeptide (Lys-Gly) (interchain with G-Cter in SUMO2) cross-link involves residue K37. Residues 45–81 (QAFLKRKEEELRRKALEEKRRKEELVKKRIELKHDKK) are a coiled coil. The segment at 79-168 (DKKARAMAKR…PLKSAPPPMN (90 aa)) is disordered. The segment covering 101 to 111 (IEEKSKKRQAT) has biased composition (basic and acidic residues). Residues 123–148 (YEMEEENEFLEYNHAESEQEYEEEQE) are a coiled coil. A Glycyl lysine isopeptide (Lys-Gly) (interchain with G-Cter in SUMO2) cross-link involves residue K187. Basic and acidic residues-rich tracts occupy residues 188–209 (VVKKSEERPMTAEELREREFLE) and 260–275 (HAEKKSRPSMANEKHL). 2 disordered regions span residues 188-615 (VVKK…QEEI) and 644-685 (SWKE…LKRR). S278 carries the phosphoserine modification. 3 stretches are compositionally biased toward low complexity: residues 317–330 (SSTSSPSVPKTSAS), 365–385 (SPGVRQPGSSSSSAPGQPSTG), and 402–415 (GSSSSGPERSISGS). A compositionally biased stretch (polar residues) spans 416–431 (KKPTNDSNPSRRTVSG). Residues 435 to 501 (PGQPASSSGG…PGRSISGSIP (67 aa)) show a composition bias toward low complexity. A Phosphoserine modification is found at S471. Polar residues predominate over residues 519–529 (GPGQTVSSSGP). Residues 542 to 553 (ISSKNIISRSSN) are compositionally biased toward low complexity. Residues 571–685 (GPQRLPFPTG…RRRAKKLKRR (115 aa)) form an important for interaction with histones region. N6-acetyllysine is present on K582. A compositionally biased stretch (acidic residues) spans 587 to 613 (YEEEDDDDDEYDSEMEDFIEDEGEPQE). At S599 the chain carries Phosphoserine. Basic and acidic residues-rich tracts occupy residues 644–655 (SWKEQQKEEAKS) and 666–676 (EMRREEEEMQR). Residues 645-685 (WKEQQKEEAKSLRLGMQEDLEEMRREEEEMQRRRAKKLKRR) adopt a coiled-coil conformation.

It belongs to the SPT2 family. Interacts with histones. Interacts with a heterotetrameric complex formed by histone H3 and H4, especially when the histone tetramer is not bound to DNA. Interacts with histone H3.3.

The protein resides in the nucleus. Its subcellular location is the nucleolus. Histone chaperone that stabilizes pre-existing histone tetramers and regulates replication-independent histone exchange on chromatin. Required for normal chromatin refolding in the coding region of transcribed genes, and for the suppression of spurious transcription. Binds DNA and histones and promotes nucleosome assembly (in vitro). Facilitates formation of tetrameric histone complexes containing histone H3 and H4. Modulates RNA polymerase 1-mediated transcription. Binds DNA, with a preference for branched DNA species, such as Y-form DNA and Holliday junction DNA. The polypeptide is Protein SPT2 homolog (SPTY2D1) (Homo sapiens (Human)).